The following is a 211-amino-acid chain: MRKLSFLDRVIEELDSYARFTKVPLNPSKKSPSSDTIDGKLSEIEKKHSAGLMRVDYTGEICAQGLYRGQASVAKSPQTKEHLYHAAAEEYDHLAWCGERLQELGARPSLLNPFWYWTSFGIGAVAGSISDSLSYGFVVETEKQVMKHLDSHLKSLPVNDNRSREILKQMYIDESEHAVEAEKAGGKKLPKTVKAIMKLQSKVMTTLAYRF.

Residues E60, E90, H93, E142, E174, and H177 each coordinate Fe cation.

This sequence belongs to the COQ7 family. The cofactor is Fe cation.

It is found in the cell membrane. The enzyme catalyses a 5-methoxy-2-methyl-3-(all-trans-polyprenyl)benzene-1,4-diol + AH2 + O2 = a 3-demethylubiquinol + A + H2O. Its pathway is cofactor biosynthesis; ubiquinone biosynthesis. Catalyzes the hydroxylation of 2-nonaprenyl-3-methyl-6-methoxy-1,4-benzoquinol during ubiquinone biosynthesis. The polypeptide is 3-demethoxyubiquinol 3-hydroxylase (Francisella tularensis subsp. tularensis (strain FSC 198)).